Reading from the N-terminus, the 616-residue chain is Dihydroxy-acid dehydratase (616 aa).

Asp-81 is a Mg(2+) binding site. Cys-122 contributes to the [2Fe-2S] cluster binding site. The Mg(2+) site is built by Asp-123 and Lys-124. At Lys-124 the chain carries N6-carboxylysine. Cys-195 serves as a coordination point for [2Fe-2S] cluster. Position 491 (Glu-491) interacts with Mg(2+). Catalysis depends on Ser-517, which acts as the Proton acceptor.

This sequence belongs to the IlvD/Edd family. As to quaternary structure, homodimer. The cofactor is [2Fe-2S] cluster. Mg(2+) is required as a cofactor.

The enzyme catalyses (2R)-2,3-dihydroxy-3-methylbutanoate = 3-methyl-2-oxobutanoate + H2O. The catalysed reaction is (2R,3R)-2,3-dihydroxy-3-methylpentanoate = (S)-3-methyl-2-oxopentanoate + H2O. It participates in amino-acid biosynthesis; L-isoleucine biosynthesis; L-isoleucine from 2-oxobutanoate: step 3/4. It functions in the pathway amino-acid biosynthesis; L-valine biosynthesis; L-valine from pyruvate: step 3/4. In terms of biological role, functions in the biosynthesis of branched-chain amino acids. Catalyzes the dehydration of (2R,3R)-2,3-dihydroxy-3-methylpentanoate (2,3-dihydroxy-3-methylvalerate) into 2-oxo-3-methylpentanoate (2-oxo-3-methylvalerate) and of (2R)-2,3-dihydroxy-3-methylbutanoate (2,3-dihydroxyisovalerate) into 2-oxo-3-methylbutanoate (2-oxoisovalerate), the penultimate precursor to L-isoleucine and L-valine, respectively. The sequence is that of Dihydroxy-acid dehydratase from Klebsiella pneumoniae subsp. pneumoniae (strain ATCC 700721 / MGH 78578).